An 87-amino-acid chain; its full sequence is Histone H1.C6/H1.C9 (87 aa).

A disordered region spans residues 1 to 87; the sequence is MSDAAVPPKK…KKAVKKAPKK (87 aa). Basic residues predominate over residues 11–87; the sequence is ASPKKASPKK…KKAVKKAPKK (77 aa).

The protein localises to the nucleus. It is found in the chromosome. The sequence is that of Histone H1.C6/H1.C9 from Trypanosoma cruzi.